The chain runs to 327 residues: Aldo/keto reductase slr0942 (327 aa).

NADP(+) is bound at residue 18–27; the sequence is GEQIPALGLG. Tyr-57 acts as the Proton donor in catalysis. Residue His-119 participates in substrate binding. 216 to 280 is an NADP(+) binding site; the sequence is SPLGSGDRPA…SVNPERLEQN (65 aa).

Belongs to the aldo/keto reductase family. As to quaternary structure, monomer.

It carries out the reaction a secondary alcohol + NADP(+) = a ketone + NADPH + H(+). Its activity is regulated as follows. Curcumin non-competitively inhibits the enzyme with respect to furfural. To a lesser extent, enzyme activity is also inhibited by indomethacin, coumarate, coumarin, and alrestatin. Functionally, aldo/keto reductase with broad substrate spectrum. Catalyzes the NADPH-dependent reduction of aldehyde- and ketone-groups of different classes of carbonyl compounds to the corresponding alcohols. Highest enzymatic efficiency is observed with 4-oxonon-2-enal (4-ONE) and 4-hydroxynon-2-enal (4-HNE), that are lipid peroxidation products, and 9,10-phenanthrenequinone (9,10-PQ), a photoproduct of phenanthrene that is one of the most prevalent polycyclic aromatic hydrocarbons in the environment. Is also active on sugar-derived reactive carbonyls such as methylglyoxal (MG), glyoxal and 3-deoxyglucosone (3-DG), and on other lipid-derived carbonyls such as acrolein. May be involved in the detoxification of the toxic lipid peroxidation products 4-ONE and 4-HNE besides many other exo- and endogenic reactive carbonyl compounds (RCs) that may lead to photoinhibition or other cell damages. This chain is Aldo/keto reductase slr0942, found in Synechocystis sp. (strain ATCC 27184 / PCC 6803 / Kazusa).